Consider the following 130-residue polypeptide: Peptide methionine sulfoxide reductase MsrB (130 aa).

Positions L8–R130 constitute a MsrB domain. Zn(2+)-binding residues include C47, C50, C96, and C99. Catalysis depends on C119, which acts as the Nucleophile.

This sequence belongs to the MsrB Met sulfoxide reductase family. Zn(2+) serves as cofactor.

The enzyme catalyses L-methionyl-[protein] + [thioredoxin]-disulfide + H2O = L-methionyl-(R)-S-oxide-[protein] + [thioredoxin]-dithiol. This Pseudomonas fluorescens (strain ATCC BAA-477 / NRRL B-23932 / Pf-5) protein is Peptide methionine sulfoxide reductase MsrB.